We begin with the raw amino-acid sequence, 302 residues long: tRNA dimethylallyltransferase 2 (302 aa).

An ATP-binding site is contributed by 6-13; that stretch reads GPTACGKT. Residue 8–13 coordinates substrate; it reads TACGKT. Interaction with substrate tRNA regions lie at residues 31-34 and 154-158; these read DSRQ and QRAIR.

It belongs to the IPP transferase family. As to quaternary structure, monomer. Requires Mg(2+) as cofactor.

The catalysed reaction is adenosine(37) in tRNA + dimethylallyl diphosphate = N(6)-dimethylallyladenosine(37) in tRNA + diphosphate. Functionally, catalyzes the transfer of a dimethylallyl group onto the adenine at position 37 in tRNAs that read codons beginning with uridine, leading to the formation of N6-(dimethylallyl)adenosine (i(6)A). This is tRNA dimethylallyltransferase 2 from Porphyromonas gingivalis (strain ATCC BAA-308 / W83).